The sequence spans 384 residues: S-adenosylmethionine synthase (384 aa).

His15 contacts ATP. Asp17 contributes to the Mg(2+) binding site. A K(+)-binding site is contributed by Glu43. Residues Glu56 and Gln99 each coordinate L-methionine. A flexible loop region spans residues 99–109 (QSPDINQGVDR). ATP contacts are provided by residues 164 to 166 (DAK), 230 to 231 (RF), Asp239, 245 to 246 (RK), Ala262, and Lys266. L-methionine is bound at residue Asp239. Residue Lys270 coordinates L-methionine.

It belongs to the AdoMet synthase family. In terms of assembly, homotetramer; dimer of dimers. The cofactor is Mg(2+). It depends on K(+) as a cofactor.

It localises to the cytoplasm. The catalysed reaction is L-methionine + ATP + H2O = S-adenosyl-L-methionine + phosphate + diphosphate. It functions in the pathway amino-acid biosynthesis; S-adenosyl-L-methionine biosynthesis; S-adenosyl-L-methionine from L-methionine: step 1/1. Its function is as follows. Catalyzes the formation of S-adenosylmethionine (AdoMet) from methionine and ATP. The overall synthetic reaction is composed of two sequential steps, AdoMet formation and the subsequent tripolyphosphate hydrolysis which occurs prior to release of AdoMet from the enzyme. The polypeptide is S-adenosylmethionine synthase (Klebsiella pneumoniae (strain 342)).